The chain runs to 510 residues: Mitogen-activated protein kinase 9 (510 aa).

In terms of domain architecture, Protein kinase spans Y23–F314. ATP-binding positions include I29–V37 and K52. Catalysis depends on D149, which acts as the Proton acceptor. Phosphothreonine is present on T185. Positions T185–Y187 match the TXY motif. At Y187 the chain carries Phosphotyrosine. Position 190 is a phosphothreonine (T190). Residues N393–T461 are disordered. Residues L410–N431 are compositionally biased toward basic and acidic residues. The segment covering S433 to T461 has biased composition (polar residues).

This sequence belongs to the protein kinase superfamily. CMGC Ser/Thr protein kinase family. MAP kinase subfamily. In terms of processing, dually phosphorylated on Thr-185 and Tyr-187, which activates the enzyme.

The enzyme catalyses L-seryl-[protein] + ATP = O-phospho-L-seryl-[protein] + ADP + H(+). It catalyses the reaction L-threonyl-[protein] + ATP = O-phospho-L-threonyl-[protein] + ADP + H(+). Activated by threonine and tyrosine phosphorylation. This is Mitogen-activated protein kinase 9 (MPK9) from Arabidopsis thaliana (Mouse-ear cress).